A 599-amino-acid polypeptide reads, in one-letter code: Beta-myrcene synthase, chloroplastic (599 aa).

A chloroplast-targeting transit peptide spans 1–34; that stretch reads MWSTISISMNVAILKKPLNFLHNSNNKASNPRCV. Mg(2+) is bound by residues aspartate 352, aspartate 356, aspartate 496, threonine 500, and glutamate 504. The DDXXD motif signature appears at 352 to 356; the sequence is DDVYD.

Belongs to the terpene synthase family. It depends on Mg(2+) as a cofactor. Mn(2+) is required as a cofactor.

It is found in the plastid. It localises to the chloroplast. It catalyses the reaction (2E)-geranyl diphosphate = beta-myrcene + diphosphate. It functions in the pathway secondary metabolite biosynthesis; terpenoid biosynthesis. Functionally, monoterpene synthase that catalyzes the formation of beta-myrcene from geranyl diphosphate. This Ocimum basilicum (Sweet basil) protein is Beta-myrcene synthase, chloroplastic (MYS).